The following is a 377-amino-acid chain: UPF0754 membrane protein GK0639 (377 aa).

The next 2 helical transmembrane spans lie at 7–27 (LLFM…IAIV) and 357–377 (YLGA…GLWL).

Belongs to the UPF0754 family.

Its subcellular location is the cell membrane. This chain is UPF0754 membrane protein GK0639, found in Geobacillus kaustophilus (strain HTA426).